The chain runs to 326 residues: Virulence-associated V antigen (326 aa).

It localises to the secreted. Involved in calcium regulation of yop expression, which includes the export process. The chain is Virulence-associated V antigen (lcrV) from Yersinia pseudotuberculosis serotype I (strain IP32953).